Here is a 383-residue protein sequence, read N- to C-terminus: S-adenosylmethionine synthase (383 aa).

His15 lines the ATP pocket. Residue Asp17 coordinates Mg(2+). Residue Glu43 participates in K(+) binding. L-methionine is bound by residues Glu56 and Gln99. The segment at 99–109 (QSPDINQGVDR) is flexible loop. ATP is bound by residues 164–166 (DAK), 230–231 (RF), Asp239, 245–246 (RK), Ala262, and Lys266. L-methionine is bound at residue Asp239. Lys270 serves as a coordination point for L-methionine.

It belongs to the AdoMet synthase family. In terms of assembly, homotetramer; dimer of dimers. Mg(2+) serves as cofactor. Requires K(+) as cofactor.

It is found in the cytoplasm. It carries out the reaction L-methionine + ATP + H2O = S-adenosyl-L-methionine + phosphate + diphosphate. It functions in the pathway amino-acid biosynthesis; S-adenosyl-L-methionine biosynthesis; S-adenosyl-L-methionine from L-methionine: step 1/1. Its function is as follows. Catalyzes the formation of S-adenosylmethionine (AdoMet) from methionine and ATP. The overall synthetic reaction is composed of two sequential steps, AdoMet formation and the subsequent tripolyphosphate hydrolysis which occurs prior to release of AdoMet from the enzyme. In Pectobacterium carotovorum subsp. carotovorum (strain PC1), this protein is S-adenosylmethionine synthase.